Consider the following 264-residue polypeptide: Thiazole synthase (264 aa).

Catalysis depends on K98, which acts as the Schiff-base intermediate with DXP. Residues G159, 185-186 (AG), and 207-208 (AT) each bind 1-deoxy-D-xylulose 5-phosphate.

The protein belongs to the ThiG family. Homotetramer. Forms heterodimers with either ThiH or ThiS.

It localises to the cytoplasm. It carries out the reaction [ThiS sulfur-carrier protein]-C-terminal-Gly-aminoethanethioate + 2-iminoacetate + 1-deoxy-D-xylulose 5-phosphate = [ThiS sulfur-carrier protein]-C-terminal Gly-Gly + 2-[(2R,5Z)-2-carboxy-4-methylthiazol-5(2H)-ylidene]ethyl phosphate + 2 H2O + H(+). The protein operates within cofactor biosynthesis; thiamine diphosphate biosynthesis. Functionally, catalyzes the rearrangement of 1-deoxy-D-xylulose 5-phosphate (DXP) to produce the thiazole phosphate moiety of thiamine. Sulfur is provided by the thiocarboxylate moiety of the carrier protein ThiS. In vitro, sulfur can be provided by H(2)S. This chain is Thiazole synthase, found in Mycobacterium ulcerans (strain Agy99).